Reading from the N-terminus, the 211-residue chain is Dual specificity protein phosphatase 26 (211 aa).

A Tyrosine-protein phosphatase domain is found at 60–207; sequence NHADEVWPGL…LLALDRRLRQ (148 aa). Cysteine 152 acts as the Phosphocysteine intermediate in catalysis.

Belongs to the protein-tyrosine phosphatase family. Non-receptor class dual specificity subfamily. In terms of assembly, interacts with HSF4. Brain and skeletal muscle. In the brain it is expressed ubiquitously except in the hippocampus.

Its subcellular location is the cytoplasm. The protein localises to the nucleus. It localises to the golgi apparatus. The catalysed reaction is O-phospho-L-tyrosyl-[protein] + H2O = L-tyrosyl-[protein] + phosphate. The enzyme catalyses O-phospho-L-seryl-[protein] + H2O = L-seryl-[protein] + phosphate. It carries out the reaction O-phospho-L-threonyl-[protein] + H2O = L-threonyl-[protein] + phosphate. In terms of biological role, inactivates MAPK1 and MAPK3 which leads to dephosphorylation of heat shock factor protein 4 and a reduction in its DNA-binding activity. The chain is Dual specificity protein phosphatase 26 (Dusp26) from Mus musculus (Mouse).